A 160-amino-acid polypeptide reads, in one-letter code: ATP synthase subunit b (160 aa).

A helical membrane pass occupies residues 12-32 (ISFVLFVWFCMKYVWYPFISI).

The protein belongs to the ATPase B chain family. F-type ATPases have 2 components, F(1) - the catalytic core - and F(0) - the membrane proton channel. F(1) has five subunits: alpha(3), beta(3), gamma(1), delta(1), epsilon(1). F(0) has three main subunits: a(1), b(2) and c(10-14). The alpha and beta chains form an alternating ring which encloses part of the gamma chain. F(1) is attached to F(0) by a central stalk formed by the gamma and epsilon chains, while a peripheral stalk is formed by the delta and b chains.

It localises to the cell inner membrane. Its function is as follows. F(1)F(0) ATP synthase produces ATP from ADP in the presence of a proton or sodium gradient. F-type ATPases consist of two structural domains, F(1) containing the extramembraneous catalytic core and F(0) containing the membrane proton channel, linked together by a central stalk and a peripheral stalk. During catalysis, ATP synthesis in the catalytic domain of F(1) is coupled via a rotary mechanism of the central stalk subunits to proton translocation. Component of the F(0) channel, it forms part of the peripheral stalk, linking F(1) to F(0). This is ATP synthase subunit b from Blochmanniella pennsylvanica (strain BPEN).